The following is a 121-amino-acid chain: Large ribosomal subunit protein bL20 (121 aa).

This sequence belongs to the bacterial ribosomal protein bL20 family.

In terms of biological role, binds directly to 23S ribosomal RNA and is necessary for the in vitro assembly process of the 50S ribosomal subunit. It is not involved in the protein synthesizing functions of that subunit. The polypeptide is Large ribosomal subunit protein bL20 (Beijerinckia indica subsp. indica (strain ATCC 9039 / DSM 1715 / NCIMB 8712)).